The following is a 351-amino-acid chain: Ribosomal RNA large subunit methyltransferase M (351 aa).

S-adenosyl-L-methionine contacts are provided by residues Ser-183, 216-219 (APGG), Asp-235, Asp-255, and Asp-271. The Proton acceptor role is filled by Lys-300.

This sequence belongs to the class I-like SAM-binding methyltransferase superfamily. RNA methyltransferase RlmE family. RlmM subfamily. Monomer.

The protein localises to the cytoplasm. It carries out the reaction cytidine(2498) in 23S rRNA + S-adenosyl-L-methionine = 2'-O-methylcytidine(2498) in 23S rRNA + S-adenosyl-L-homocysteine + H(+). Catalyzes the 2'-O-methylation at nucleotide C2498 in 23S rRNA. The polypeptide is Ribosomal RNA large subunit methyltransferase M (Ectopseudomonas mendocina (strain ymp) (Pseudomonas mendocina)).